The following is a 336-amino-acid chain: Small ribosomal subunit protein RACK1y (336 aa).

WD repeat units follow at residues 15 to 55 (GHND…TAVA), 74 to 113 (GHSHFVQDVVLSSDGQFALSGSWDGELRLWDLATGRTTRR), 116 to 155 (GHTKDVLSVAFSVDNRQIVSAARDNTIKLWNTLGECKYTI), 164 to 205 (GHTG…LRTK), 208 to 247 (GHNGYVNAVAVSPDGSLCASGGKDGTTLLWDLTEGKMLYK), 249 to 287 (DAGAIIHSLCFSPNRYWLCAATEDSVKIWDLESKLVMQD), and 297 to 336 (SQMLYCTSLSWSADGSTLFAGYTDGTIRVWKVSGFGGYAI).

It belongs to the WD repeat G protein beta family. Ribosomal protein RACK1 subfamily. As to quaternary structure, homodimer and heterodimer with RACK1A.

Component of the RACK1 regulatory proteins that play a role in multiple signal transduction pathways. This chain is Small ribosomal subunit protein RACK1y (RACK1B), found in Oryza sativa subsp. japonica (Rice).